A 298-amino-acid chain; its full sequence is ATP synthase gamma chain (298 aa).

This sequence belongs to the ATPase gamma chain family. In terms of assembly, F-type ATPases have 2 components, CF(1) - the catalytic core - and CF(0) - the membrane proton channel. CF(1) has five subunits: alpha(3), beta(3), gamma(1), delta(1), epsilon(1). CF(0) has three main subunits: a, b and c.

Its subcellular location is the cell inner membrane. In terms of biological role, produces ATP from ADP in the presence of a proton gradient across the membrane. The gamma chain is believed to be important in regulating ATPase activity and the flow of protons through the CF(0) complex. In Zymomonas mobilis subsp. mobilis (strain ATCC 31821 / ZM4 / CP4), this protein is ATP synthase gamma chain.